Reading from the N-terminus, the 227-residue chain is DNA packaging ATPase P9 (227 aa).

16–23 is an ATP binding site; it reads GKTGTGKT.

In terms of assembly, heterodimer of P6 and P9; further multimerizes as hexamers of heterodimers. Part of the dodecameric portal complex that is composed of the packaging efficiency factor P6, the DNA packaging ATPase P9, and the internal heterododecamer P20/P22 which spans the virion inner membrane.

It localises to the virion. Together with the packaging efficiency factor P6, forms the external part of the portal vertex that is embeded in the capsid and which plays critical roles in genome packaging and genome ejection. Both proteins multimerize as a single ring-shaped heterdodecamer arranged around a central channel. The polypeptide is DNA packaging ATPase P9 (IX) (Enterobacteria phage PRD1 (Bacteriophage PRD1)).